Here is a 396-residue protein sequence, read N- to C-terminus: Elongation factor Tu (396 aa).

One can recognise a tr-type G domain in the interval 10–206 (KPHVNVGTIG…ALDTYIPTPE (197 aa)). A G1 region spans residues 19–26 (GHVDHGKT). 19–26 (GHVDHGKT) is a binding site for GTP. Mg(2+) is bound at residue threonine 26. The tract at residues 60–64 (GITIN) is G2. The G3 stretch occupies residues 81–84 (DCPG). Residues 81 to 85 (DCPGH) and 136 to 139 (NKCD) each bind GTP. Residues 136–139 (NKCD) are G4. The segment at 174-176 (SAK) is G5.

It belongs to the TRAFAC class translation factor GTPase superfamily. Classic translation factor GTPase family. EF-Tu/EF-1A subfamily. As to quaternary structure, monomer.

Its subcellular location is the cytoplasm. It carries out the reaction GTP + H2O = GDP + phosphate + H(+). GTP hydrolase that promotes the GTP-dependent binding of aminoacyl-tRNA to the A-site of ribosomes during protein biosynthesis. The polypeptide is Elongation factor Tu (Polynucleobacter asymbioticus (strain DSM 18221 / CIP 109841 / QLW-P1DMWA-1) (Polynucleobacter necessarius subsp. asymbioticus)).